A 341-amino-acid polypeptide reads, in one-letter code: NADH-ubiquinone oxidoreductase chain 2 (341 aa).

The next 9 helical transmembrane spans lie at 8-28 (IFLI…SWLG), 61-81 (FLTQ…LMFL), 95-115 (ILIL…FWFP), 145-165 (FIYN…SLGG), 174-191 (LMAF…LAMM), 195-215 (MLWM…VLMF), 238-258 (LLIF…GFLP), 272-292 (LFIL…YLRL), and 321-341 (LIFN…YIIM).

The protein belongs to the complex I subunit 2 family.

Its subcellular location is the mitochondrion inner membrane. The catalysed reaction is a ubiquinone + NADH + 5 H(+)(in) = a ubiquinol + NAD(+) + 4 H(+)(out). In terms of biological role, core subunit of the mitochondrial membrane respiratory chain NADH dehydrogenase (Complex I) that is believed to belong to the minimal assembly required for catalysis. Complex I functions in the transfer of electrons from NADH to the respiratory chain. The immediate electron acceptor for the enzyme is believed to be ubiquinone. The sequence is that of NADH-ubiquinone oxidoreductase chain 2 (mt:ND2) from Anopheles gambiae (African malaria mosquito).